The following is a 732-amino-acid chain: Ribosomal RNA large subunit methyltransferase K/L (732 aa).

Residues 50-162 (MAYRICLWSR…RGRLLLGLDL (113 aa)) form the THUMP domain. The disordered stretch occupies residues 396 to 424 (TERETSSEGDEPQGASGATSRPGPRNDGA).

This sequence belongs to the methyltransferase superfamily. RlmKL family.

The protein resides in the cytoplasm. It carries out the reaction guanosine(2445) in 23S rRNA + S-adenosyl-L-methionine = N(2)-methylguanosine(2445) in 23S rRNA + S-adenosyl-L-homocysteine + H(+). The catalysed reaction is guanosine(2069) in 23S rRNA + S-adenosyl-L-methionine = N(2)-methylguanosine(2069) in 23S rRNA + S-adenosyl-L-homocysteine + H(+). Functionally, specifically methylates the guanine in position 2445 (m2G2445) and the guanine in position 2069 (m7G2069) of 23S rRNA. The polypeptide is Ribosomal RNA large subunit methyltransferase K/L (Chromohalobacter salexigens (strain ATCC BAA-138 / DSM 3043 / CIP 106854 / NCIMB 13768 / 1H11)).